The sequence spans 461 residues: Zinc transporter 6 (461 aa).

The Cytoplasmic portion of the chain corresponds to 1 to 33 (MGTIHLFRKPQRSFFGKLLREFRLVAADRRSWK). Residues 34 to 54 (ILLFGVINLICTGFLLMWCSS) traverse the membrane as a helical segment. At 55-64 (TNSIALTAYT) the chain is on the extracellular side. The helical transmembrane segment at 65–85 (YLTIFDLFSLMTCLISYWVTL) threads the bilayer. The Cytoplasmic segment spans residues 86-98 (RKPSPVYSFGFER). Residues 99–119 (LEVLAVFASTVLAQLGALFIL) traverse the membrane as a helical segment. Over 120–134 (KESAERFLEQPEIHT) the chain is Extracellular. Residues 135–155 (GRLLVGTFVALCFNLFTMLSI) traverse the membrane as a helical segment. Over 156 to 200 (RNKPFAYVSEAASTSWLQEHVADLSRSLCGIIPGLSSIFLPRMNP) the chain is Cytoplasmic. The helical transmembrane segment at 201-221 (FVLIDLAGAFALCITYMLIEI) threads the bilayer. Residues 222–223 (NN) are Extracellular-facing. A helical transmembrane segment spans residues 224 to 244 (YFAVDTASAIAIALMTFGTMY). The Cytoplasmic segment spans residues 245–461 (PMSVYSGKVL…TNNRIGQPRP (217 aa)). A disordered region spans residues 371–392 (NPVTSTPAKPSSPPPEFSFNTP).

The protein belongs to the cation diffusion facilitator (CDF) transporter (TC 2.A.4) family. SLC30A subfamily. In terms of assembly, heterodimer with SLC30A5; form a functional zinc ion transmembrane transporter. Expressed in brain; especially in cerebellum, hippocampus, parahippocampal gyrus, superior and middle temporal gyrus. Also expressed in B-cells, colon, eye, and lung. Lower expression was present in bone, brain, cervix, ear, heart, kidney, muscle, nerve, pancreas, prostate, skin, stomach, and testis.

The protein localises to the golgi apparatus. It is found in the trans-Golgi network membrane. In terms of biological role, has probably no intrinsic transporter activity but together with SLC30A5 forms a functional zinc ion:proton antiporter heterodimer, mediating zinc entry into the lumen of organelles along the secretory pathway. As part of that zinc ion:proton antiporter, contributes to zinc ion homeostasis within the early secretory pathway and regulates the activation and folding of enzymes like alkaline phosphatases and enzymes involved in phosphatidylinositol glycan anchor biosynthesis. This chain is Zinc transporter 6, found in Homo sapiens (Human).